A 248-amino-acid polypeptide reads, in one-letter code: UPF0736 protein ABC2536 (248 aa).

This sequence belongs to the UPF0736 family.

In Shouchella clausii (strain KSM-K16) (Alkalihalobacillus clausii), this protein is UPF0736 protein ABC2536.